The sequence spans 182 residues: Functional amyloid subunit FapB (182 aa).

An N-terminal signal peptide occupies residues 1 to 18 (MTHSWLLLTVLGCSAAMA). The FapB_R1 repeat unit spans residues 22–58 (NQALIDNAGKQYTGVLSVNQAAGNQHQQINSRAISLG). The stretch at 80–114 (SAAIQGSAFSNGNGILGVNQSAGANNQMINAVRIS) is one FapB_R2 repeat. The FapB_R3 repeat unit spans residues 150-180 (SDQAFTGSRGVVQVNQSAGVGNRMANTLGVT).

Belongs to the FapB/FapC family. As to quaternary structure, forms fibrils in vitro; in the presence of FapA the fibrils are slightly narrower. A minor component of purified amyloid fibrils. Fibrils are resistant to boiling in 2% (weight/vol) SDS and require &gt;90% (vol/vol) formic acid to dissolve.

The protein localises to the fimbrium. The protein resides in the secreted. Its function is as follows. A minor component of the functional amyloid in this bacterium. Probably nucleates fibril formation; FapB nucleates fibrillation its own, FapA inhibits FapB fibril elongation. Upon overexpression of the endogenous six-gene locus (fapA-fapF) in situ, cells form large clumps during liquid growth, make large amounts of biofilm and produce amyloid fibrils. Expression of the 6 gene operon in E.coli strain BL21(DE3) induces flocculation and biofilm formation with copious extracellular fibrils. This is Functional amyloid subunit FapB from Pseudomonas fluorescens.